We begin with the raw amino-acid sequence, 393 residues long: Chalcone synthase DIII (393 aa).

The active site involves C164.

This sequence belongs to the thiolase-like superfamily. Chalcone/stilbene synthases family.

It carries out the reaction (E)-4-coumaroyl-CoA + 3 malonyl-CoA + 3 H(+) = 2',4,4',6'-tetrahydroxychalcone + 3 CO2 + 4 CoA. The protein operates within secondary metabolite biosynthesis; flavonoid biosynthesis. In terms of biological role, the primary product of this enzyme is 4,2',4',6'-tetrahydroxychalcone (also termed naringenin-chalcone or chalcone) which can under specific conditions spontaneously isomerize into naringenin. The sequence is that of Chalcone synthase DIII (CHS-DIII) from Ipomoea batatas (Sweet potato).